A 277-amino-acid polypeptide reads, in one-letter code: Large ribosomal subunit protein uL2 (277 aa).

Positions 226–277 (MNPVDHPHGGGEGRSPIGMPSPVTPWGKPTLGYKTRKPNKKSDRLIVSRRKK) are disordered.

The protein belongs to the universal ribosomal protein uL2 family. As to quaternary structure, part of the 50S ribosomal subunit. Forms a bridge to the 30S subunit in the 70S ribosome.

Functionally, one of the primary rRNA binding proteins. Required for association of the 30S and 50S subunits to form the 70S ribosome, for tRNA binding and peptide bond formation. It has been suggested to have peptidyltransferase activity; this is somewhat controversial. Makes several contacts with the 16S rRNA in the 70S ribosome. The polypeptide is Large ribosomal subunit protein uL2 (Symbiobacterium thermophilum (strain DSM 24528 / JCM 14929 / IAM 14863 / T)).